An 831-amino-acid polypeptide reads, in one-letter code: Periplasmic nitrate reductase (831 aa).

The segment at residues 1 to 29 (MTLSRRDFIKQTAVAATASVAGVTLPAGA) is a signal peptide (tat-type signal). The 4Fe-4S Mo/W bis-MGD-type domain maps to 41-97 (LKWSKAPCRFCGTGCGVTVAVRDNKVVATNGDPQAEVNKGLNCVKGYFLSKIMYGQD). The [4Fe-4S] cluster site is built by Cys48, Cys51, Cys55, and Cys83. Mo-bis(molybdopterin guanine dinucleotide) contacts are provided by residues Lys85, Gln152, Asn177, Cys181, 214–221 (WGSNMAEM), 245–249 (STFTH), 264–266 (QTD), Met375, Gln379, Asn485, 511–512 (SD), Lys534, Asp561, and 721–730 (TGRVLEHWHS). Trp797 contributes to the substrate binding site. Mo-bis(molybdopterin guanine dinucleotide)-binding residues include Asn805 and Lys822.

It belongs to the prokaryotic molybdopterin-containing oxidoreductase family. NasA/NapA/NarB subfamily. Component of the periplasmic nitrate reductase NapAB complex composed of NapA and NapB. [4Fe-4S] cluster is required as a cofactor. It depends on Mo-bis(molybdopterin guanine dinucleotide) as a cofactor. Predicted to be exported by the Tat system. The position of the signal peptide cleavage has not been experimentally proven.

It localises to the periplasm. The enzyme catalyses 2 Fe(II)-[cytochrome] + nitrate + 2 H(+) = 2 Fe(III)-[cytochrome] + nitrite + H2O. Catalytic subunit of the periplasmic nitrate reductase complex NapAB. Receives electrons from NapB and catalyzes the reduction of nitrate to nitrite. This is Periplasmic nitrate reductase from Cupriavidus taiwanensis (strain DSM 17343 / BCRC 17206 / CCUG 44338 / CIP 107171 / LMG 19424 / R1) (Ralstonia taiwanensis (strain LMG 19424)).